The primary structure comprises 805 residues: Arginine/serine-rich protein PNISR (805 aa).

A compositionally biased stretch (polar residues) spans 74-88 (PNNHGNFQGDSNFNR). Disordered regions lie at residues 74–331 (PNNH…EEKE) and 382–805 (LTGL…SRSR). Pro residues-rich tracts occupy residues 100–115 (PPHPPPDQPWMPPTPG) and 183–195 (YWQPGPPGPPAPP). The segment covering 197–210 (NRRERPSSFRDRQR) has biased composition (basic and acidic residues). A phosphoserine mark is found at Ser-204 and Ser-211. A Glycyl lysine isopeptide (Lys-Gly) (interchain with G-Cter in SUMO2) cross-link involves residue Lys-218. A coiled-coil region spans residues 237–276 (REGLEKMEREKQKKLEKERMEQQRSQLSKKEKKATEDAEG). Positions 238 to 258 (EGLEKMEREKQKKLEKERMEQ) are enriched in basic and acidic residues. 4 positions are modified to phosphoserine: Ser-290, Ser-304, Ser-313, and Ser-321. Residues 290 to 299 (SDEEEEDTEN) are compositionally biased toward acidic residues. The span at 384 to 393 (GLGGLGGYGS) shows a compositional bias: gly residues. Residues 421 to 463 (QKQEAFWRKEKEQQLLHDKQMEEEKQQTERVTKEMNEFIHKEQ) are compositionally biased toward basic and acidic residues. The stretch at 429–461 (KEKEQQLLHDKQMEEEKQQTERVTKEMNEFIHK) forms a coiled coil. Phosphoserine is present on residues Ser-465 and Ser-467. Basic and acidic residues-rich tracts occupy residues 470-486 (EAREADGDVVNEKKRTP) and 494-506 (EPKKEHKEKEKQG). Residue Thr-485 is modified to Phosphothreonine. Residue Lys-496 forms a Glycyl lysine isopeptide (Lys-Gly) (interchain with G-Cter in SUMO2) linkage. A compositionally biased stretch (low complexity) spans 508-550 (SRSGSSSSGSSSSNSRTSSTSSTVSSSSYSSSSGSSRTSSRSS). Basic residues-rich tracts occupy residues 551–579 (SPKRKKRHSRSRSPTIKARRSRSRSYSRR), 587–598 (ARVKIRDRRRSN), and 607–639 (RRNRSPSRERRRSRSRSRDRRTNRASRSRSRDR). The span at 659–721 (EAKEQERKKE…KRKRESERTF (63 aa)) shows a compositional bias: basic and acidic residues. A coiled-coil region spans residues 673–703 (IDKDRKKKDKEREREQDKRKEKQKREEKDFK). A Glycyl lysine isopeptide (Lys-Gly) (interchain with G-Cter in SUMO2) cross-link involves residue Lys-703. Ser-726 bears the Phosphoserine mark. The segment covering 732 to 753 (IRHDSRQDSKKSTTKDSKKHSG) has biased composition (basic and acidic residues). Over residues 754-767 (SDSSGRSSSESPGS) the composition is skewed to low complexity. Composition is skewed to basic residues over residues 771–781 (KKAKKPKHSRS) and 789–805 (RSGKKASRKHKSKSRSR).

This sequence belongs to the splicing factor SR family. As to quaternary structure, interacts with PNN. In terms of tissue distribution, expressed in heart, skeletal muscle, thymus, spleen, kidney, liver, placenta and leukocytes.

It is found in the nucleus speckle. The chain is Arginine/serine-rich protein PNISR (PNISR) from Homo sapiens (Human).